Here is a 339-residue protein sequence, read N- to C-terminus: NADH-quinone oxidoreductase subunit H (339 aa).

A run of 8 helical transmembrane segments spans residues Leu19 to Ala39, Phe87 to Phe107, Leu120 to Ala140, Ser153 to Met173, Phe191 to Val211, Ile253 to Phe273, Pro275 to Phe295, and Leu310 to Met330.

This sequence belongs to the complex I subunit 1 family. NDH-1 is composed of 14 different subunits. Subunits NuoA, H, J, K, L, M, N constitute the membrane sector of the complex.

It is found in the cell inner membrane. The catalysed reaction is a quinone + NADH + 5 H(+)(in) = a quinol + NAD(+) + 4 H(+)(out). Its function is as follows. NDH-1 shuttles electrons from NADH, via FMN and iron-sulfur (Fe-S) centers, to quinones in the respiratory chain. The immediate electron acceptor for the enzyme in this species is believed to be ubiquinone. Couples the redox reaction to proton translocation (for every two electrons transferred, four hydrogen ions are translocated across the cytoplasmic membrane), and thus conserves the redox energy in a proton gradient. This subunit may bind ubiquinone. This is NADH-quinone oxidoreductase subunit H from Methylobacillus flagellatus (strain ATCC 51484 / DSM 6875 / VKM B-1610 / KT).